Here is a 1102-residue protein sequence, read N- to C-terminus: Voltage-gated delayed rectifier potassium channel KCNH8 (1102 aa).

The Cytoplasmic segment spans residues 1 to 225; sequence MPVMKGLLAP…HFSTFKAGWD (225 aa). The PAS domain occupies 18–90; sequence IATRFDGTHS…LQIEKSLEEK (73 aa). A PAC domain is found at 93-145; it reads FKGEIMFYKKNGAPFWCLLDIVPIKNEKGDVVLFLASFKDITDTKVKITSEDK. Residues 142–151 show a composition bias toward basic and acidic residues; the sequence is SEDKKEDRTK. Residues 142-162 form a disordered region; the sequence is SEDKKEDRTKGRSRAGSHFDS. Residues 226–246 traverse the membrane as a helical segment; sequence WLILLATFYVAVTVPYNVCFI. The Extracellular segment spans residues 247-255; that stretch reads GNEDLSTTR. The chain crosses the membrane as a helical span at residues 256–276; that stretch reads STTVSDIAVEILFIIDIILNF. Residues 277–298 are Cytoplasmic-facing; the sequence is RTTYVSKSGQVIFEARSICIHY. A helical transmembrane segment spans residues 299-319; it reads VTTWFIIDLIAALPFDLLYAF. N-linked (GlcNAc...) asparagine glycosylation occurs at Asn-320. At 320-327 the chain is on the extracellular side; sequence NVTVVSLV. The helical; Voltage-sensor transmembrane segment at 328 to 348 threads the bilayer; that stretch reads HLLKTVRLLRLLRLLQKLDRY. At 349–357 the chain is on the cytoplasmic side; the sequence is SQHSTIVLT. A helical membrane pass occupies residues 358–378; it reads LLMSMFALLAHWMACIWYVIG. At 379–419 the chain is on the extracellular side; sequence KMEREDNSLLKWEVGWLHELGKRLESPYYGNNTLGGPSIRS. N-linked (GlcNAc...) asparagine glycosylation is present at Asn-409. Residues 420 to 440 constitute an intramembrane region (pore-forming); it reads AYIAALYFTLSSLTSVGFGNV. The short motif at 434–439 is the Selectivity filter element; the sequence is SVGFGN. The Extracellular segment spans residues 441–448; the sequence is SANTDAEK. The chain crosses the membrane as a helical span at residues 449 to 469; sequence IFSICTMLIGALMHALVFGNV. The Cytoplasmic segment spans residues 470-1102; the sequence is TAIIQRMYSR…DVKDSKAINV (633 aa). Positions 551–668 are cNMP-binding domain; that stretch reads LFECASRGCL…HKFVEDIQHD (118 aa). Residues 684 to 693 are compositionally biased toward polar residues; it reads RLSNKSTVSQ. Disordered stretches follow at residues 684-743, 764-841, and 960-991; these read RLSN…KKTG, HSPI…PEPR, and LVGSSPQRTEAHEQNPADSELHHSPNLDYSPS. Positions 710–723 are enriched in acidic residues; that stretch reads VEDEEEEEVEEEET. Positions 724–737 are enriched in polar residues; it reads TSLSPIYTRGSSVS. The segment covering 968-984 has biased composition (basic and acidic residues); sequence TEAHEQNPADSELHHSP.

This sequence belongs to the potassium channel family. H (Eag) (TC 1.A.1.20) subfamily. Kv12.1/KCNH8 sub-subfamily. In terms of assembly, the potassium channel is probably composed of a homo- or heterotetrameric complex of pore-forming alpha subunits that can associate with modulating beta subunits.

It is found in the membrane. It catalyses the reaction K(+)(in) = K(+)(out). Pore-forming (alpha) subunit of a voltage-gated delayed rectifier potassium channel that mediates outward-rectifying potassium currents. Elicits a slowly activating, non-inactivating and slowly deactivation outwards potassium current at depolarizating voltages from -30 mV to +50mV. Shows no obvious change in the activation rate from different holding potentials. Activation is strongly dependent on the pH of the external solution. The chain is Voltage-gated delayed rectifier potassium channel KCNH8 from Mus musculus (Mouse).